The chain runs to 182 residues: Ribosome maturation factor RimM (182 aa).

Residues 99 to 176 form the PRC barrel domain; sequence DDEYYHADLI…ELPAEIEGDT (78 aa).

Belongs to the RimM family. In terms of assembly, binds ribosomal protein uS19.

It localises to the cytoplasm. Functionally, an accessory protein needed during the final step in the assembly of 30S ribosomal subunit, possibly for assembly of the head region. Essential for efficient processing of 16S rRNA. May be needed both before and after RbfA during the maturation of 16S rRNA. It has affinity for free ribosomal 30S subunits but not for 70S ribosomes. The protein is Ribosome maturation factor RimM of Rhodopseudomonas palustris (strain HaA2).